Reading from the N-terminus, the 103-residue chain is Integration host factor subunit beta (103 aa).

Positions 59-82 (RLGRNPKTGESVALPGKHVPHFKP) are disordered.

This sequence belongs to the bacterial histone-like protein family. In terms of assembly, heterodimer of an alpha and a beta chain.

Its function is as follows. This protein is one of the two subunits of integration host factor, a specific DNA-binding protein that functions in genetic recombination as well as in transcriptional and translational control. The sequence is that of Integration host factor subunit beta from Xanthomonas oryzae pv. oryzae (strain MAFF 311018).